A 172-amino-acid chain; its full sequence is NAD(P)H-quinone oxidoreductase subunit J (172 aa).

The protein belongs to the complex I 30 kDa subunit family. As to quaternary structure, NDH-1 can be composed of about 15 different subunits; different subcomplexes with different compositions have been identified which probably have different functions.

It localises to the cellular thylakoid membrane. The enzyme catalyses a plastoquinone + NADH + (n+1) H(+)(in) = a plastoquinol + NAD(+) + n H(+)(out). The catalysed reaction is a plastoquinone + NADPH + (n+1) H(+)(in) = a plastoquinol + NADP(+) + n H(+)(out). Its function is as follows. NDH-1 shuttles electrons from an unknown electron donor, via FMN and iron-sulfur (Fe-S) centers, to quinones in the respiratory and/or the photosynthetic chain. The immediate electron acceptor for the enzyme in this species is believed to be plastoquinone. Couples the redox reaction to proton translocation, and thus conserves the redox energy in a proton gradient. Cyanobacterial NDH-1 also plays a role in inorganic carbon-concentration. This is NAD(P)H-quinone oxidoreductase subunit J from Synechococcus sp. (strain ATCC 27144 / PCC 6301 / SAUG 1402/1) (Anacystis nidulans).